Here is a 155-residue protein sequence, read N- to C-terminus: Protein SprT-like (155 aa).

The SprT-like domain occupies 7–145; the sequence is QRHMEEVSLQ…GSCGGKLIQI (139 aa). Position 67 (H67) interacts with Zn(2+). The active site involves E68. Residue H71 coordinates Zn(2+).

It belongs to the SprT family. Zn(2+) serves as cofactor.

It localises to the cytoplasm. This chain is Protein SprT-like, found in Listeria monocytogenes serotype 4a (strain HCC23).